Reading from the N-terminus, the 467-residue chain is Asparagine--tRNA ligase (467 aa).

This sequence belongs to the class-II aminoacyl-tRNA synthetase family. As to quaternary structure, homodimer.

The protein localises to the cytoplasm. It carries out the reaction tRNA(Asn) + L-asparagine + ATP = L-asparaginyl-tRNA(Asn) + AMP + diphosphate + H(+). This is Asparagine--tRNA ligase from Haemophilus influenzae (strain PittEE).